A 1002-amino-acid polypeptide reads, in one-letter code: Calcium-transporting ATPase sarcoplasmic/endoplasmic reticulum type (1002 aa).

At 1-48 the chain is on the cytoplasmic side; sequence MEDGHSKTVEQSLNFFGTDGERGLTLDQIKTNQAKYGPNELPTEEGKS. The helical transmembrane segment at 49–69 threads the bilayer; the sequence is IWQLVLEQFDDLLVKILLLAA. Residues 70–89 are Lumenal-facing; the sequence is IISFVLALFEEHEETFTAFV. The helical transmembrane segment at 90–110 threads the bilayer; that stretch reads EPLVILLILIANAVVGVWQER. The Cytoplasmic portion of the chain corresponds to 111-253; it reads NAESAIEALK…EIKTPLQQKL (143 aa). The chain crosses the membrane as a helical span at residues 254-273; that stretch reads DEFGEQLSKVISVICVAVWA. Topologically, residues 274–295 are lumenal; sequence INIGHFNDPAHGGSWIKGAIYY. The chain crosses the membrane as a helical span at residues 296 to 313; it reads FKIAVALAVAAIPEGLPA. Residues Val-304, Ala-305, Ile-307, and Glu-309 each coordinate Ca(2+). The Cytoplasmic portion of the chain corresponds to 314 to 757; it reads VITTCLALGT…EEGRAIYNNM (444 aa). Asp-351 (4-aspartylphosphate intermediate) is an active-site residue. Residues Asp-703 and Asp-707 each contribute to the Mg(2+) site. A helical transmembrane segment spans residues 758 to 777; that stretch reads KQFIRYLISSNIGEVVSIFL. 2 residues coordinate Ca(2+): Asn-768 and Glu-771. The Lumenal segment spans residues 778 to 787; that stretch reads TAALGLPEAL. Residues 788-808 form a helical membrane-spanning segment; sequence IPVQLLWVNLVTDGLPATALG. Ca(2+) contacts are provided by Asn-796, Thr-799, and Asp-800. The Cytoplasmic portion of the chain corresponds to 809-828; it reads FNPPDLDIMDKPPRKADEGL. The helical transmembrane segment at 829–851 threads the bilayer; the sequence is ISGWLFFRYMAIGFYVGAATVGA. Over 852 to 897 the chain is Lumenal; that stretch reads AAWWFIASSEGPGLTYWQLTHHLSCLGGGDEFKGVDCKIFSDPKAM. Residues 898–917 form a helical membrane-spanning segment; sequence TMALSVLVTIEMLNAMNSLS. Glu-908 contributes to the Ca(2+) binding site. Residues 918 to 930 lie on the Cytoplasmic side of the membrane; that stretch reads ENQSLISMPPWCN. Residues 931-949 form a helical membrane-spanning segment; it reads LWLIGSMALSFTLHFVILY. The Lumenal portion of the chain corresponds to 950-964; the sequence is VDVLSTVFQVTPLSA. The helical transmembrane segment at 965-985 threads the bilayer; sequence EEWITVMKFSIPVVLLDETLK. Residues 986–1002 lie on the Cytoplasmic side of the membrane; sequence FVARKIADVPDAVVDKW.

The protein belongs to the cation transport ATPase (P-type) (TC 3.A.3) family.

Its subcellular location is the endoplasmic reticulum membrane. It is found in the sarcoplasmic reticulum membrane. It catalyses the reaction Ca(2+)(in) + ATP + H2O = Ca(2+)(out) + ADP + phosphate + H(+). This magnesium-dependent enzyme catalyzes the hydrolysis of ATP coupled with the transport of calcium. The sequence is that of Calcium-transporting ATPase sarcoplasmic/endoplasmic reticulum type from Drosophila pseudoobscura pseudoobscura (Fruit fly).